We begin with the raw amino-acid sequence, 86 residues long: Exodeoxyribonuclease 7 small subunit (86 aa).

This sequence belongs to the XseB family. As to quaternary structure, heterooligomer composed of large and small subunits.

The protein localises to the cytoplasm. The catalysed reaction is Exonucleolytic cleavage in either 5'- to 3'- or 3'- to 5'-direction to yield nucleoside 5'-phosphates.. Its function is as follows. Bidirectionally degrades single-stranded DNA into large acid-insoluble oligonucleotides, which are then degraded further into small acid-soluble oligonucleotides. This Agrobacterium fabrum (strain C58 / ATCC 33970) (Agrobacterium tumefaciens (strain C58)) protein is Exodeoxyribonuclease 7 small subunit.